The sequence spans 438 residues: UDP-N-acetylmuramoylalanine--D-glutamate ligase (438 aa).

Residue 112–118 (GSNGKST) coordinates ATP.

It belongs to the MurCDEF family.

It localises to the cytoplasm. The catalysed reaction is UDP-N-acetyl-alpha-D-muramoyl-L-alanine + D-glutamate + ATP = UDP-N-acetyl-alpha-D-muramoyl-L-alanyl-D-glutamate + ADP + phosphate + H(+). It functions in the pathway cell wall biogenesis; peptidoglycan biosynthesis. Its function is as follows. Cell wall formation. Catalyzes the addition of glutamate to the nucleotide precursor UDP-N-acetylmuramoyl-L-alanine (UMA). The protein is UDP-N-acetylmuramoylalanine--D-glutamate ligase of Salmonella typhimurium (strain LT2 / SGSC1412 / ATCC 700720).